Reading from the N-terminus, the 191-residue chain is GDP-mannose pyrophosphatase (191 aa).

Residues Y17, 38 to 40, R67, and 85 to 87 contribute to the GDP-alpha-D-mannose site; these read KRE and AGL. The Nudix hydrolase domain occupies 43-180; it reads DRGNGATILL…EIRDGKTVLL (138 aa). Positions 85, 100, and 104 each coordinate Mg(2+). The Nudix box motif lies at 86 to 106; that stretch reads GLLDNDEPEVCIRKEAIEETG. GDP-alpha-D-mannose-binding positions include E104, E127, 150 to 151, and K176; that span reads DE. Residue E151 participates in Mg(2+) binding.

It belongs to the Nudix hydrolase family. NudK subfamily. As to quaternary structure, homodimer. Mg(2+) serves as cofactor.

The catalysed reaction is GDP-alpha-D-mannose + H2O = alpha-D-mannose 1-phosphate + GMP + 2 H(+). Functionally, nucleoside diphosphate sugar hydrolase that hydrolyzes GDP-mannose as its preferred substrate, yielding GMP and mannose-1-phosphate. The chain is GDP-mannose pyrophosphatase (nudK) from Salmonella typhi.